Here is a 287-residue protein sequence, read N- to C-terminus: Pantothenate synthetase (287 aa).

30-37 (MGALHSGH) is an ATP binding site. Residue His37 is the Proton donor of the active site. Gln61 contributes to the (R)-pantoate binding site. Gln61 serves as a coordination point for beta-alanine. 152-155 (GQKD) contributes to the ATP binding site. Gln158 is a binding site for (R)-pantoate. Residues Ile181 and 189–192 (ESSR) contribute to the ATP site.

This sequence belongs to the pantothenate synthetase family. In terms of assembly, homodimer.

It is found in the cytoplasm. It catalyses the reaction (R)-pantoate + beta-alanine + ATP = (R)-pantothenate + AMP + diphosphate + H(+). It participates in cofactor biosynthesis; (R)-pantothenate biosynthesis; (R)-pantothenate from (R)-pantoate and beta-alanine: step 1/1. Functionally, catalyzes the condensation of pantoate with beta-alanine in an ATP-dependent reaction via a pantoyl-adenylate intermediate. The sequence is that of Pantothenate synthetase from Corynebacterium efficiens (strain DSM 44549 / YS-314 / AJ 12310 / JCM 11189 / NBRC 100395).